The sequence spans 258 residues: 4-hydroxy-2-oxovalerate aldolase (258 aa).

His48 acts as the Proton acceptor in catalysis. Residue Gln149 coordinates substrate. Glu151 is a Mg(2+) binding site. Residues Ala176 and Asp177 each coordinate substrate. Asp177 contacts Mg(2+).

This sequence belongs to the HpcH/HpaI aldolase family.

It catalyses the reaction (S)-4-hydroxy-2-oxopentanoate = acetaldehyde + pyruvate. Its pathway is xenobiotic degradation; biphenyl degradation. In terms of biological role, catalyzes the reversible retro-aldol cleavage of 4-hydroxy-2-oxovalerate to pyruvate and acetaldehyde. This Rhodococcus jostii (strain RHA1) protein is 4-hydroxy-2-oxovalerate aldolase (bphF).